Reading from the N-terminus, the 105-residue chain is Small ribosomal subunit protein uS10 (105 aa).

It belongs to the universal ribosomal protein uS10 family. As to quaternary structure, part of the 30S ribosomal subunit.

Its function is as follows. Involved in the binding of tRNA to the ribosomes. The sequence is that of Small ribosomal subunit protein uS10 from Rickettsia bellii (strain OSU 85-389).